The chain runs to 639 residues: Sec1 family domain-containing protein 1 (639 aa).

Phosphoserine is present on residues Ser-34, Ser-300, and Ser-525.

It belongs to the STXBP/unc-18/SEC1 family. In terms of assembly, interacts with STX17. Interacts with STX5A. Interacts with the COG complex via COG4.

It localises to the cytoplasm. It is found in the endoplasmic reticulum membrane. Its subcellular location is the golgi apparatus. The protein localises to the golgi stack membrane. Its function is as follows. Plays a role in SNARE-pin assembly and Golgi-to-ER retrograde transport via its interaction with COG4. Involved in vesicular transport between the endoplasmic reticulum and the Golgi. This is Sec1 family domain-containing protein 1 (Scfd1) from Mus musculus (Mouse).